The sequence spans 85 residues: Large ribosomal subunit protein bL27 (85 aa).

The protein belongs to the bacterial ribosomal protein bL27 family.

The chain is Large ribosomal subunit protein bL27 from Cellvibrio japonicus (strain Ueda107) (Pseudomonas fluorescens subsp. cellulosa).